We begin with the raw amino-acid sequence, 84 residues long: Sec-independent protein translocase protein TatA (84 aa).

Residues 4–24 form a helical membrane-spanning segment; that stretch reads MSPVHWLILAVVLLVVFGGGG. The interval 46 to 84 is disordered; sequence DDESMTATDATQAPGHISPPNQNPGYSQTTSSETHRNQV. Residues 64 to 77 are compositionally biased toward polar residues; it reads PPNQNPGYSQTTSS.

The protein belongs to the TatA/E family. As to quaternary structure, the Tat system comprises two distinct complexes: a TatABC complex, containing multiple copies of TatA, TatB and TatC subunits, and a separate TatA complex, containing only TatA subunits. Substrates initially bind to the TatABC complex, which probably triggers association of the separate TatA complex to form the active translocon.

It localises to the cell inner membrane. Part of the twin-arginine translocation (Tat) system that transports large folded proteins containing a characteristic twin-arginine motif in their signal peptide across membranes. TatA could form the protein-conducting channel of the Tat system. This is Sec-independent protein translocase protein TatA from Gluconobacter oxydans (strain 621H) (Gluconobacter suboxydans).